Reading from the N-terminus, the 376-residue chain is MKKIILVAGGTGGHFFPAVALGEELIKRGYEVHFITDLRCKQYIKQDMKVIFHILDLKRSGNIFLFLPRLSIAVLKAIKLLYNMKSAVTVGFGGYPVIAPMFAAIFLRVPIIIHEQNSYLGKVNKFFASFAKKIAISYEKIKNLPEFAKSKIVVTGGVVRENIRELKVIEMSSRGLTTGSKKSLIKALDSVVKPRNDKLFTIFIFGGSQGAKLFSELISASIQIVMQKQPSLELNIIQQAALDDQVKIKDIYSKLNITYEFAEFFDNMALQYKEADLVISRAGASTIEELTYIGLPAIFIPLPSAADNHQYYNAKLLEDKNAGWCLEQNNISAEKLADKILDLISNPKILEAASQNLLKRRKEGHKLLSNLIEEVI.

Residues 11–13 (TGG), asparagine 117, arginine 160, serine 208, and glutamine 310 each bind UDP-N-acetyl-alpha-D-glucosamine.

The protein belongs to the glycosyltransferase 28 family. MurG subfamily.

The protein localises to the cell inner membrane. The catalysed reaction is di-trans,octa-cis-undecaprenyl diphospho-N-acetyl-alpha-D-muramoyl-L-alanyl-D-glutamyl-meso-2,6-diaminopimeloyl-D-alanyl-D-alanine + UDP-N-acetyl-alpha-D-glucosamine = di-trans,octa-cis-undecaprenyl diphospho-[N-acetyl-alpha-D-glucosaminyl-(1-&gt;4)]-N-acetyl-alpha-D-muramoyl-L-alanyl-D-glutamyl-meso-2,6-diaminopimeloyl-D-alanyl-D-alanine + UDP + H(+). It participates in cell wall biogenesis; peptidoglycan biosynthesis. Its function is as follows. Cell wall formation. Catalyzes the transfer of a GlcNAc subunit on undecaprenyl-pyrophosphoryl-MurNAc-pentapeptide (lipid intermediate I) to form undecaprenyl-pyrophosphoryl-MurNAc-(pentapeptide)GlcNAc (lipid intermediate II). This is UDP-N-acetylglucosamine--N-acetylmuramyl-(pentapeptide) pyrophosphoryl-undecaprenol N-acetylglucosamine transferase from Rickettsia massiliae (strain Mtu5).